Here is a 153-residue protein sequence, read N- to C-terminus: Large ribosomal subunit protein uL15 (153 aa).

A disordered region spans residues 1–42 (MRLNTIKPGMGSTKPRRRVGRGIGSGLGKTCGRGHKGQKSRA). A compositionally biased stretch (gly residues) spans 21 to 31 (RGIGSGLGKTC).

Belongs to the universal ribosomal protein uL15 family. In terms of assembly, part of the 50S ribosomal subunit.

In terms of biological role, binds to the 23S rRNA. In Nitrosomonas eutropha (strain DSM 101675 / C91 / Nm57), this protein is Large ribosomal subunit protein uL15.